The chain runs to 111 residues: uncharacterized protein (111 aa).

This sequence to A.fulgidus AF1864.

This is an uncharacterized protein from Aquifex aeolicus (strain VF5).